The following is a 148-amino-acid chain: MVTGKQTELIPIPFPPYQIPYSSKFTDSPAFIYFVAAFSVAGLYSIITSLLSGLALLKPGYAKQLVSHFVVVDVLLLGIVAAAIGAAGGVGYIGLRGNSHSRWTKICNIYDTFCQHLAGSIAAGLIASIVLVLLILLSFFTLSRKIPK.

Transmembrane regions (helical) follow at residues 31–51 (FIYF…TSLL), 74–94 (VLLL…GYIG), and 121–141 (IAAG…SFFT).

Belongs to the Casparian strip membrane proteins (CASP) family. As to quaternary structure, homodimer and heterodimers.

It is found in the cell membrane. The protein is CASP-like protein 1 of Panax ginseng (Korean ginseng).